The primary structure comprises 20 residues: Brevinin-1T (20 aa).

A disulfide bridge links C14 with C20.

This sequence belongs to the frog skin active peptide (FSAP) family. Brevinin subfamily. In terms of tissue distribution, expressed by the skin glands.

Its subcellular location is the secreted. Antibacterial activity against representative Gram-negative and Gram-positive bacteria and exhibits a very high hemolytic activity. This chain is Brevinin-1T, found in Rana temporaria (European common frog).